A 251-amino-acid chain; its full sequence is 3-deoxy-manno-octulosonate cytidylyltransferase (251 aa).

Belongs to the KdsB family.

Its subcellular location is the cytoplasm. The enzyme catalyses 3-deoxy-alpha-D-manno-oct-2-ulosonate + CTP = CMP-3-deoxy-beta-D-manno-octulosonate + diphosphate. The protein operates within nucleotide-sugar biosynthesis; CMP-3-deoxy-D-manno-octulosonate biosynthesis; CMP-3-deoxy-D-manno-octulosonate from 3-deoxy-D-manno-octulosonate and CTP: step 1/1. It participates in bacterial outer membrane biogenesis; lipopolysaccharide biosynthesis. Functionally, activates KDO (a required 8-carbon sugar) for incorporation into bacterial lipopolysaccharide in Gram-negative bacteria. In Brucella ovis (strain ATCC 25840 / 63/290 / NCTC 10512), this protein is 3-deoxy-manno-octulosonate cytidylyltransferase.